The chain runs to 157 residues: Protein Smg (157 aa).

The protein belongs to the Smg family.

In Buchnera aphidicola subsp. Acyrthosiphon pisum (strain Tuc7), this protein is Protein Smg.